The primary structure comprises 361 residues: MLRLKNDRFIRALLRQPVDRTPVWIMRQAGRYLPEYRQLREKVPNFMAFCKTPELACEATLQPLRRFPLDAAIIFSDILTIPDAMGVDLHIAPTVGPVIRNPVRSAQDVNRLQMPAVEEALSYLFDAIRLTVKALDHRVPLIGFAGSPWTLACYMTEGQSSKTFLTARAMLYQQPDVFHTLLQKLTTLTIAYLNAQIKAGADVVMLFDTWGGLLTPSLYRQFSLDYLSQIAAEVVRQKNGRKIPLIFFTKNGGQWLESIANSGCDAVGLDWTTDIGQARRRVGDRVALQGNLDPAILLSNPESISTAAVDILKSYGQGSGHVFNLGHGIDPSTPIENVAALVEAVQNFSIKNEKPISSYYR.

Residues 27–31 (RQAGR), Asp77, Tyr154, Thr209, and His327 contribute to the substrate site.

The protein belongs to the uroporphyrinogen decarboxylase family. In terms of assembly, homodimer.

It is found in the cytoplasm. It carries out the reaction uroporphyrinogen III + 4 H(+) = coproporphyrinogen III + 4 CO2. Its pathway is porphyrin-containing compound metabolism; protoporphyrin-IX biosynthesis; coproporphyrinogen-III from 5-aminolevulinate: step 4/4. Catalyzes the decarboxylation of four acetate groups of uroporphyrinogen-III to yield coproporphyrinogen-III. This Coxiella burnetii (strain RSA 331 / Henzerling II) protein is Uroporphyrinogen decarboxylase.